The following is a 690-amino-acid chain: MAKKKSEEHSGADANDSDYQEEPNFEDPPGFVDNISDEDLLGDMLAQRPSEADGVESVVVVDNIPKVEPERLDKLKLVINKLFSNYGDIVNVVYPVDEDGKTKGYAFMEYKQASQAEEAVKKLNNHRLDKNHTFAVNLFTDFQKYENIPEKWEPPTVQTFKVQSDLYNFINDPDTYDQYCVAAETAPNCVQVGFWQNVLPEPFELETRERFTDTFVKWSPLGTYVVTFHKPGVAIWGGSSFQKIQKFPHPGTQFVEFSPCENYLVTYGPTPTGQKIIIWDIRTGAEKRSFVADGMSVLSMFRWSHDDKFVARMGENSIHIYETPSFFLLDLKSIKIPGIRGFSWSPTDNVIAYWVEEQNQIPARVTLMEIPKKREIRNKNLFHVADCKLHWQKSGDYLCVKVDRYSKLKKDKKDLDVKFLGMFYNFEIFHMREKEIPVDSVEIRELILAFAWEPIGNKFSIIHGEQNSSNVSFYEVNKGVKPSLVKRLEKKSCTHLFWSPRGQFIVMANLTMGTFEFVDSTNDYIISASPDHFRASEVEWDPTGRYVVTGVSSWKVKEDTGFNMYTFQGRIIKRTILKNFVQFLWRPRPPTLLGEEKQKEIKKNLKKYYAAFEQKDRLRLTRASKELLEKRSQLRETFMEYRNKRIAEWADQKSRRIMLRGHVDTDNLETDEVDEEIVEFLVKEEVTLLE.

Basic and acidic residues predominate over residues 1-11 (MAKKKSEEHSG). Residues 1–36 (MAKKKSEEHSGADANDSDYQEEPNFEDPPGFVDNIS) are disordered. Residues 15–25 (NDSDYQEEPNF) show a composition bias toward acidic residues. The RRM domain occupies 57–141 (SVVVVDNIPK…HTFAVNLFTD (85 aa)). WD repeat units follow at residues 207–246 (TRERFTDTFVKWSPLGTYVVTFHKPGVAIWGGSSFQKIQK), 293–331 (DGMSVLSMFRWSHDDKFVARMGENSIHIYETPSFFLLDL), 334–369 (IKIPGIRGFSWSPTDNVIAYWVEEQNQIPARVTLME), 442–484 (EIRE…KPSL), and 530–575 (PDHF…IKRT). The stretch at 595–645 (EEKQKEIKKNLKKYYAAFEQKDRLRLTRASKELLEKRSQLRETFMEYRNKR) forms a coiled coil.

It belongs to the eIF-3 subunit B family. As to quaternary structure, component of the eukaryotic translation initiation factor 3 (eIF-3) complex. The eIF-3 complex interacts with pix. Interacts with mxt.

Its subcellular location is the cytoplasm. Functionally, RNA-binding component of the eukaryotic translation initiation factor 3 (eIF-3) complex, which is involved in protein synthesis of a specialized repertoire of mRNAs and, together with other initiation factors, stimulates binding of mRNA and methionyl-tRNAi to the 40S ribosome. The eIF-3 complex specifically targets and initiates translation of a subset of mRNAs involved in cell proliferation. This is Eukaryotic translation initiation factor 3 subunit B from Drosophila erecta (Fruit fly).